The primary structure comprises 236 residues: Phosphoribosylaminoimidazole-succinocarboxamide synthase (236 aa).

It belongs to the SAICAR synthetase family.

It carries out the reaction 5-amino-1-(5-phospho-D-ribosyl)imidazole-4-carboxylate + L-aspartate + ATP = (2S)-2-[5-amino-1-(5-phospho-beta-D-ribosyl)imidazole-4-carboxamido]succinate + ADP + phosphate + 2 H(+). It functions in the pathway purine metabolism; IMP biosynthesis via de novo pathway; 5-amino-1-(5-phospho-D-ribosyl)imidazole-4-carboxamide from 5-amino-1-(5-phospho-D-ribosyl)imidazole-4-carboxylate: step 1/2. The protein is Phosphoribosylaminoimidazole-succinocarboxamide synthase of Hahella chejuensis (strain KCTC 2396).